The primary structure comprises 104 residues: Large ribosomal subunit protein uL24 (104 aa).

Belongs to the universal ribosomal protein uL24 family. In terms of assembly, part of the 50S ribosomal subunit.

Functionally, one of two assembly initiator proteins, it binds directly to the 5'-end of the 23S rRNA, where it nucleates assembly of the 50S subunit. Its function is as follows. One of the proteins that surrounds the polypeptide exit tunnel on the outside of the subunit. This Shewanella oneidensis (strain ATCC 700550 / JCM 31522 / CIP 106686 / LMG 19005 / NCIMB 14063 / MR-1) protein is Large ribosomal subunit protein uL24.